A 160-amino-acid chain; its full sequence is NADH-quinone oxidoreductase subunit B (160 aa).

Residues Cys37, Cys38, Cys102, and Cys132 each contribute to the [4Fe-4S] cluster site.

The protein belongs to the complex I 20 kDa subunit family. NDH-1 is composed of 14 different subunits. Subunits NuoB, C, D, E, F, and G constitute the peripheral sector of the complex. [4Fe-4S] cluster is required as a cofactor.

It localises to the cell inner membrane. The enzyme catalyses a quinone + NADH + 5 H(+)(in) = a quinol + NAD(+) + 4 H(+)(out). NDH-1 shuttles electrons from NADH, via FMN and iron-sulfur (Fe-S) centers, to quinones in the respiratory chain. Couples the redox reaction to proton translocation (for every two electrons transferred, four hydrogen ions are translocated across the cytoplasmic membrane), and thus conserves the redox energy in a proton gradient. The sequence is that of NADH-quinone oxidoreductase subunit B from Neisseria gonorrhoeae (strain NCCP11945).